Consider the following 271-residue polypeptide: Probable septum site-determining protein MinC (271 aa).

The disordered stretch occupies residues 106 to 125; it reads RRAPSPKAADDAPAQPEEPR. Low complexity predominate over residues 110 to 119; that stretch reads SPKAADDAPA.

The protein belongs to the MinC family. Interacts with MinD and FtsZ.

In terms of biological role, cell division inhibitor that blocks the formation of polar Z ring septums. Rapidly oscillates between the poles of the cell to destabilize FtsZ filaments that have formed before they mature into polar Z rings. Prevents FtsZ polymerization. This chain is Probable septum site-determining protein MinC, found in Burkholderia thailandensis (strain ATCC 700388 / DSM 13276 / CCUG 48851 / CIP 106301 / E264).